Consider the following 86-residue polypeptide: Small ribosomal subunit protein uS15 (86 aa).

The segment at 1 to 22 is disordered; the sequence is MSVDTQKVIEDNKRSAQDTGSP. The segment covering 7–16 has biased composition (basic and acidic residues); the sequence is KVIEDNKRSA.

The protein belongs to the universal ribosomal protein uS15 family. As to quaternary structure, part of the 30S ribosomal subunit. Forms a bridge to the 50S subunit in the 70S ribosome, contacting the 23S rRNA.

Its function is as follows. One of the primary rRNA binding proteins, it binds directly to 16S rRNA where it helps nucleate assembly of the platform of the 30S subunit by binding and bridging several RNA helices of the 16S rRNA. Forms an intersubunit bridge (bridge B4) with the 23S rRNA of the 50S subunit in the ribosome. In Xanthomonas campestris pv. campestris (strain 8004), this protein is Small ribosomal subunit protein uS15.